Consider the following 1206-residue polypeptide: Cilia- and flagella-associated protein 157 (1206 aa).

Disordered regions lie at residues 26–52, 79–109, 125–173, and 327–405; these read GGGG…GRDL, RAEQ…QQAP, EATC…RGPL, and GSGK…EEDW. 3 stretches are compositionally biased toward low complexity: residues 88 to 109, 156 to 173, and 385 to 397; these read GRPQ…QQAP, AKAV…RGPL, and QQLG…QPGG. Coiled coils occupy residues 634–732, 799–833, and 876–903; these read TDEL…KTKD, TEKL…LARR, and LHLA…KTAE. 3 disordered regions span residues 936–990, 1011–1072, and 1168–1206; these read TTTN…DELS, LSHG…GATS, and PWGK…SLKV. Composition is skewed to low complexity over residues 951–973 and 1014–1035; these read AGAD…SSSA and GPLS…ALAG. Gly residues-rich tracts occupy residues 1037–1046 and 1058–1067; these read WGPGSPGGSR and SAGGMGGPQG. Composition is skewed to polar residues over residues 1175–1184 and 1193–1206; these read QQPLTTTKHS and GPSN…SLKV.

Belongs to the CFAP157 family.

It localises to the cell projection. The protein resides in the cilium. Its subcellular location is the flagellum. The chain is Cilia- and flagella-associated protein 157 from Chlamydomonas reinhardtii (Chlamydomonas smithii).